Reading from the N-terminus, the 344-residue chain is Ig alpha chain C region (344 aa).

The Ig-like 1 domain occupies 6 to 99 (PTIYPLTLPP…SNPVQELDVN (94 aa)). Cystine bridges form between Cys26–Cys84 and Cys76–Cys100. Asn38 and Asn99 each carry an N-linked (GlcNAc...) asparagine glycan. Ser101 carries an O-linked (GalNAc) serine; in variant MOPC 47A glycan. 2 cysteine pairs are disulfide-bonded: Cys114/Cys171 and Cys138/Cys195. Ig-like domains follow at residues 116–206 (PSLS…GTLT) and 219–321 (PQVH…KTID). An N-linked (GlcNAc...) asparagine glycan is attached at Asn329. Ser331 carries N-linked (GlcNAc...) asparagine; in variant M511 glycosylation.

In terms of biological role, ig alpha is the major immunoglobulin class in body secretions. It may serve both to defend against local infection and to prevent access of foreign antigens to the general immunologic system. The sequence is that of Ig alpha chain C region from Mus musculus (Mouse).